A 722-amino-acid polypeptide reads, in one-letter code: Fatty acid oxidation complex subunit alpha (722 aa).

The enoyl-CoA hydratase/isomerase stretch occupies residues 1–189 (MIYQGKSLSA…AQGAIDAVVE (189 aa)). Aspartate 296 provides a ligand contact to substrate. The interval 311-722 (TKAVNKAAVL…SYFTTDVKLA (412 aa)) is 3-hydroxyacyl-CoA dehydrogenase. Residues methionine 325, aspartate 344, 401–403 (VVE), lysine 408, and serine 430 each bind NAD(+). The For 3-hydroxyacyl-CoA dehydrogenase activity role is filled by histidine 451. Asparagine 454 provides a ligand contact to NAD(+). Residues asparagine 501 and tyrosine 661 each contribute to the substrate site.

The protein in the N-terminal section; belongs to the enoyl-CoA hydratase/isomerase family. It in the C-terminal section; belongs to the 3-hydroxyacyl-CoA dehydrogenase family. As to quaternary structure, heterotetramer of two alpha chains (FadB) and two beta chains (FadA).

The catalysed reaction is a (3S)-3-hydroxyacyl-CoA + NAD(+) = a 3-oxoacyl-CoA + NADH + H(+). It carries out the reaction a (3S)-3-hydroxyacyl-CoA = a (2E)-enoyl-CoA + H2O. The enzyme catalyses a 4-saturated-(3S)-3-hydroxyacyl-CoA = a (3E)-enoyl-CoA + H2O. It catalyses the reaction (3S)-3-hydroxybutanoyl-CoA = (3R)-3-hydroxybutanoyl-CoA. The catalysed reaction is a (3Z)-enoyl-CoA = a 4-saturated (2E)-enoyl-CoA. It carries out the reaction a (3E)-enoyl-CoA = a 4-saturated (2E)-enoyl-CoA. Its pathway is lipid metabolism; fatty acid beta-oxidation. Functionally, involved in the aerobic and anaerobic degradation of long-chain fatty acids via beta-oxidation cycle. Catalyzes the formation of 3-oxoacyl-CoA from enoyl-CoA via L-3-hydroxyacyl-CoA. It can also use D-3-hydroxyacyl-CoA and cis-3-enoyl-CoA as substrate. The polypeptide is Fatty acid oxidation complex subunit alpha (Colwellia psychrerythraea (strain 34H / ATCC BAA-681) (Vibrio psychroerythus)).